Here is a 175-residue protein sequence, read N- to C-terminus: Pituitary adenylate cyclase-activating polypeptide (175 aa).

Residues 1–24 form the signal peptide; it reads MTMCSGARLALLVYGIIMHNSVSC. Residues 25-78 constitute a propeptide that is removed on maturation; that stretch reads SPAAGLSFPGIRPEEEAYDQDGNPLQDFYDWDPPGAGSPASALRDAYALYYPAD. The tract at residues 149-157 is important for receptor binding; sequence VKKYLAAVL. At Leu-157 the chain carries Leucine amide. The residue at position 168 (Lys-168) is a Lysine amide. A propeptide spanning residues 172–175 is cleaved from the precursor; that stretch reads IAYL.

It belongs to the glucagon family.

The protein localises to the secreted. Its function is as follows. PACAP is a neuropeptide involved in diverse array of physiological processes through activating the PACAP subfamily of class B1 G protein-coupled receptors: VIP receptor 1 (VIPR1), VIP receptor 2 (VIPR2), and PACAP type I receptor (ADCYAP1R1). Exerts neuroprotective and general cytoprotective effects due to anti-apoptotic, anti-inflammatory, and antioxidant actions. Promotes neuron projection development through the RAPGEF2/Rap1/B-Raf/ERK pathway. In chromaffin cells, induces long-lasting increase of intracellular calcium concentrations and neuroendocrine secretion. Involved in the control of glucose homeostasis, induces insulin secretion by pancreatic beta cells. PACAP exists in two bioactive forms from proteolysis of the same precursor protein, PACAP27 and PACAP38, which differ by eleven amino acid residues in the C-terminus. In Rattus norvegicus (Rat), this protein is Pituitary adenylate cyclase-activating polypeptide (Adcyap1).